The following is an 84-amino-acid chain: Small ribosomal subunit protein uS15 (84 aa).

This sequence belongs to the universal ribosomal protein uS15 family. As to quaternary structure, part of the 30S ribosomal subunit. Forms a bridge to the 50S subunit in the 70S ribosome, contacting the 23S rRNA.

One of the primary rRNA binding proteins, it binds directly to 16S rRNA where it helps nucleate assembly of the platform of the 30S subunit by binding and bridging several RNA helices of the 16S rRNA. Functionally, forms an intersubunit bridge (bridge B4) with the 23S rRNA of the 50S subunit in the ribosome. In Akkermansia muciniphila (strain ATCC BAA-835 / DSM 22959 / JCM 33894 / BCRC 81048 / CCUG 64013 / CIP 107961 / Muc), this protein is Small ribosomal subunit protein uS15.